Reading from the N-terminus, the 296-residue chain is Cytidine deaminase (296 aa).

CMP/dCMP-type deaminase domains follow at residues 47-167 (ELNE…FGPS) and 186-296 (DSND…VEPE). A substrate-binding site is contributed by 88-90 (NIE). Residue His-101 coordinates Zn(2+). The Proton donor role is filled by Glu-103. Zn(2+) is bound by residues Cys-128 and Cys-131.

The protein belongs to the cytidine and deoxycytidylate deaminase family. As to quaternary structure, homodimer. Zn(2+) is required as a cofactor.

The enzyme catalyses cytidine + H2O + H(+) = uridine + NH4(+). It catalyses the reaction 2'-deoxycytidine + H2O + H(+) = 2'-deoxyuridine + NH4(+). Functionally, this enzyme scavenges exogenous and endogenous cytidine and 2'-deoxycytidine for UMP synthesis. The polypeptide is Cytidine deaminase (Shewanella halifaxensis (strain HAW-EB4)).